Here is a 410-residue protein sequence, read N- to C-terminus: Protein LTV1 homolog (410 aa).

Disordered stretches follow at residues 142-165 and 325-378; these read VYRSTRRGEDSEEEEDDDEDDEMY and EMDI…ARKL. Composition is skewed to acidic residues over residues 151-165 and 325-345; these read DSEEEEDDDEDDEMY and EMDIAEEDEDDDEDMEDDDDK. Residues 357–366 show a composition bias toward basic and acidic residues; it reads PKNETPEQRS. A coiled-coil region spans residues 363-389; the sequence is EQRSLRKKAVKEARKLRRVEKKANKTM. Basic residues predominate over residues 367-378; that stretch reads LRKKAVKEARKL.

This sequence belongs to the LTV1 family.

The polypeptide is Protein LTV1 homolog (Caenorhabditis elegans).